A 129-amino-acid chain; its full sequence is Small ribosomal subunit protein uS11 (129 aa).

Belongs to the universal ribosomal protein uS11 family. In terms of assembly, part of the 30S ribosomal subunit. Interacts with proteins S7 and S18. Binds to IF-3.

Functionally, located on the platform of the 30S subunit, it bridges several disparate RNA helices of the 16S rRNA. Forms part of the Shine-Dalgarno cleft in the 70S ribosome. The chain is Small ribosomal subunit protein uS11 from Bradyrhizobium sp. (strain ORS 278).